The chain runs to 83 residues: EMBRYO SURROUNDING FACTOR 1.1 (83 aa).

Residues 1-22 form the signal peptide; that stretch reads MKSSHTSLICILMLSLVALHQC. Cystine bridges form between cysteine 41–cysteine 56, cysteine 46–cysteine 75, cysteine 54–cysteine 71, and cysteine 57–cysteine 64.

Belongs to the MEG family. Expressed exclusively in ovule embryo sacs and in early developing endosperms.

Functionally, maternally-contributed central cell peptide regulating suspensor development and correct auxin distribution in early developing embryos. This is EMBRYO SURROUNDING FACTOR 1.1 (ESF1.1) from Arabidopsis thaliana (Mouse-ear cress).